The sequence spans 622 residues: Kelch-like protein 14 (622 aa).

The 113-residue stretch at Cys-33–Leu-145 folds into the BTB domain. The disordered stretch occupies residues Ala-73–Lys-108. The span at Pro-87–Glu-96 shows a compositional bias: pro residues. Kelch repeat units follow at residues Met-317–Asn-366, Phe-367–Lys-418, Asn-419–Gly-465, Ile-467–Asp-512, Leu-514–Asp-564, and Ile-566–Leu-614.

The protein resides in the cytoplasm. It localises to the cytosol. It is found in the endoplasmic reticulum membrane. The protein is Kelch-like protein 14 (KLHL14) of Gallus gallus (Chicken).